Consider the following 334-residue polypeptide: Protein-methionine-sulfoxide reductase catalytic subunit MsrP (334 aa).

Residues 1–44 (MKKIRKLTEADVTAESAFFMQRRQVLKALGISAAALSLPNAAHA) constitute a signal peptide (tat-type signal). Mo-molybdopterin contacts are provided by residues Asn88, 91–92 (YE), Cys146, Thr181, Asn233, Arg238, and 249–251 (GIK).

Belongs to the MsrP family. Heterodimer of a catalytic subunit (MsrP) and a heme-binding subunit (MsrQ). The cofactor is Mo-molybdopterin. Predicted to be exported by the Tat system. The position of the signal peptide cleavage has not been experimentally proven.

Its subcellular location is the periplasm. It carries out the reaction L-methionyl-[protein] + a quinone + H2O = L-methionyl-(S)-S-oxide-[protein] + a quinol. The catalysed reaction is L-methionyl-[protein] + a quinone + H2O = L-methionyl-(R)-S-oxide-[protein] + a quinol. Part of the MsrPQ system that repairs oxidized periplasmic proteins containing methionine sulfoxide residues (Met-O), using respiratory chain electrons. Thus protects these proteins from oxidative-stress damage caused by reactive species of oxygen and chlorine generated by the host defense mechanisms. MsrPQ is essential for the maintenance of envelope integrity under bleach stress, rescuing a wide series of structurally unrelated periplasmic proteins from methionine oxidation, including the primary periplasmic chaperone SurA and the lipoprotein Pal. The catalytic subunit MsrP is non-stereospecific, being able to reduce both (R-) and (S-) diastereoisomers of methionine sulfoxide. This is Protein-methionine-sulfoxide reductase catalytic subunit MsrP from Escherichia fergusonii (strain ATCC 35469 / DSM 13698 / CCUG 18766 / IAM 14443 / JCM 21226 / LMG 7866 / NBRC 102419 / NCTC 12128 / CDC 0568-73).